The following is a 182-amino-acid chain: ATP-dependent protease subunit HslV (182 aa).

Threonine 12 is an active-site residue. Alanine 167, cysteine 170, and threonine 173 together coordinate Na(+).

The protein belongs to the peptidase T1B family. HslV subfamily. In terms of assembly, a double ring-shaped homohexamer of HslV is capped on each side by a ring-shaped HslU homohexamer. The assembly of the HslU/HslV complex is dependent on binding of ATP.

It localises to the cytoplasm. The enzyme catalyses ATP-dependent cleavage of peptide bonds with broad specificity.. Its activity is regulated as follows. Allosterically activated by HslU binding. Protease subunit of a proteasome-like degradation complex believed to be a general protein degrading machinery. The polypeptide is ATP-dependent protease subunit HslV (Prosthecochloris aestuarii (strain DSM 271 / SK 413)).